We begin with the raw amino-acid sequence, 213 residues long: Motile sperm domain-containing protein 1 (213 aa).

Residues 16–143 form the MSP domain; it reads PVFVFPTELI…KEHLTESLFF (128 aa). 2 helical membrane passes run 159 to 179 and 191 to 211; these read SLLTVFLAVVCITALMLPTLG and LSVNQKLVAAYILGLITMAIF. A Nuclear export signal motif is present at residues 205-208; sequence LITM.

The protein localises to the endoplasmic reticulum membrane. Its subcellular location is the golgi apparatus membrane. In terms of biological role, plays a role in differentiation and/or proliferation of mesenchymal stem cells. Proposed to be involved in epithelial-to-mesenchymal transition (EMT). However, another study suggests that it is not required for EMT or stem cell self-renewal and acts during later stages of differentiation. The protein is Motile sperm domain-containing protein 1 (MOSPD1) of Bos taurus (Bovine).